A 427-amino-acid chain; its full sequence is Large ribosomal subunit protein uL4 (427 aa).

A2 carries the post-translational modification N-acetylalanine. The residue at position 14 (K14) is an N6-acetyllysine. R97 bears the Omega-N-methylarginine mark. N6-acetyllysine is present on K106. K239 is covalently cross-linked (Glycyl lysine isopeptide (Lys-Gly) (interchain with G-Cter in SUMO2)). Position 259 is an N6-acetyllysine (K259). Phosphothreonine is present on T266. Phosphoserine occurs at positions 290 and 295. At R300 the chain carries Citrulline. A Glycyl lysine isopeptide (Lys-Gly) (interchain with G-Cter in SUMO2) cross-link involves residue K327. K333 and K353 each carry N6-acetyllysine. K364 bears the N6-acetyllysine; alternate mark. K364 is covalently cross-linked (Glycyl lysine isopeptide (Lys-Gly) (interchain with G-Cter in SUMO1); alternate). S365 carries the phosphoserine modification. A disordered region spans residues A369 to A427. Residues V377 to V397 are compositionally biased toward basic residues. A compositionally biased stretch (basic and acidic residues) spans P407–A427.

This sequence belongs to the universal ribosomal protein uL4 family. In terms of assembly, component of the large ribosomal subunit. May bind IPO9 with low affinity. Interacts with RBM3. Citrullinated by PADI4.

It localises to the cytoplasm. Component of the large ribosomal subunit. The ribosome is a large ribonucleoprotein complex responsible for the synthesis of proteins in the cell. In Pongo abelii (Sumatran orangutan), this protein is Large ribosomal subunit protein uL4 (RPL4).